The following is a 466-amino-acid chain: MKLWGGRFTHQVDDLVNTFNSSISFDSRMYKEDIIGSIAHVTMLGEEKIIPKEDSKKIASGLYEILNKLNQGVLKIDNSSEDIHSFIESTLTDYIGEEGKKLHTGRSRNDQVTLDTKLYLKGYIKILICEILNLEKTLLNLSSENKETIMPGYTHMQKAQPITFAHHILAYSEMFKRDISRLLDCYKRLDEMPLGSGALATTTYPINREKVANLLGFSKVTLNSLDSVSDRDYAIETLSCLSLLMMHLSRFSEEIIIWSTDEFKFIELDDSYSTGSSIMPQKKNPDVAELVRGKTGRVYGDLMTLLTVMKGLPLAYNKDMQEDKEALFDGLDTTLLSIKTFNGMIKTMKINKSIMKTSASSGFTNATDVADYLVKKGVAFRDAHEIVGNLILYCIDEGKSIDNLSLSEFKTFSNKFENDIYKAINLLTCIEERKVIGGPSISSINIQIEHLNNFIQESNEKLNLLK.

Belongs to the lyase 1 family. Argininosuccinate lyase subfamily.

It localises to the cytoplasm. It catalyses the reaction 2-(N(omega)-L-arginino)succinate = fumarate + L-arginine. Its pathway is amino-acid biosynthesis; L-arginine biosynthesis; L-arginine from L-ornithine and carbamoyl phosphate: step 3/3. The protein is Argininosuccinate lyase of Clostridium perfringens (strain ATCC 13124 / DSM 756 / JCM 1290 / NCIMB 6125 / NCTC 8237 / Type A).